A 410-amino-acid chain; its full sequence is Serine hydroxymethyltransferase (410 aa).

(6S)-5,6,7,8-tetrahydrofolate-binding positions include leucine 116 and 120–122; that span reads GHL. At lysine 225 the chain carries N6-(pyridoxal phosphate)lysine. Position 349–351 (349–351) interacts with (6S)-5,6,7,8-tetrahydrofolate; the sequence is SPF.

The protein belongs to the SHMT family. Homodimer. It depends on pyridoxal 5'-phosphate as a cofactor.

It localises to the cytoplasm. The enzyme catalyses (6R)-5,10-methylene-5,6,7,8-tetrahydrofolate + glycine + H2O = (6S)-5,6,7,8-tetrahydrofolate + L-serine. It functions in the pathway one-carbon metabolism; tetrahydrofolate interconversion. Its pathway is amino-acid biosynthesis; glycine biosynthesis; glycine from L-serine: step 1/1. Functionally, catalyzes the reversible interconversion of serine and glycine with tetrahydrofolate (THF) serving as the one-carbon carrier. This reaction serves as the major source of one-carbon groups required for the biosynthesis of purines, thymidylate, methionine, and other important biomolecules. Also exhibits THF-independent aldolase activity toward beta-hydroxyamino acids, producing glycine and aldehydes, via a retro-aldol mechanism. The sequence is that of Serine hydroxymethyltransferase from Leuconostoc citreum (strain KM20).